The sequence spans 481 residues: Glutamine synthetase (481 aa).

The region spanning 22–106 (NEVEFVDFRF…VFCDVYDVYK (85 aa)) is the GS beta-grasp domain. The region spanning 114 to 481 (PRSIAKKALQ…PFEFITTYSC (368 aa)) is the GS catalytic domain. Mg(2+) contacts are provided by E139, E141, E223, and E230. L-glutamate-binding positions include 274-275 (NG) and G275. Mg(2+) is bound at residue H279. Residues 281-283 (HVS) and S283 contribute to the ATP site. L-glutamate-binding residues include R331, E337, and R349. ATP-binding residues include R349 and R354. E367 serves as a coordination point for Mg(2+). R369 provides a ligand contact to L-glutamate.

This sequence belongs to the glutamine synthetase family. Oligomer of 12 subunits arranged in the form of two hexameric ring. Mg(2+) serves as cofactor.

Its subcellular location is the cytoplasm. It carries out the reaction L-glutamate + NH4(+) + ATP = L-glutamine + ADP + phosphate + H(+). With respect to regulation, the activity of this enzyme could be controlled by adenylation under conditions of abundant glutamine. Catalyzes the ATP-dependent biosynthesis of glutamine from glutamate and ammonia. The protein is Glutamine synthetase of Helicobacter pylori (strain ATCC 700392 / 26695) (Campylobacter pylori).